An 821-amino-acid polypeptide reads, in one-letter code: Centrosomal protein of 95 kDa (821 aa).

Disordered regions lie at residues 310–354, 390–474, and 514–550; these read TLCK…FPQK, ATGE…DTHH, and KEAF…SSKA. Basic and acidic residues-rich tracts occupy residues 325-340 and 390-410; these read ESSK…RSEN and ATGE…HSAN. Residues 427–441 show a composition bias toward basic residues; the sequence is RKPRPGFSMHRKAPY. Serine 445, serine 447, and serine 449 each carry phosphoserine. Coiled-coil stretches lie at residues 578-627 and 695-789; these read LTKM…VKKE and LQIQ…DDDA.

Its subcellular location is the cytoplasm. It is found in the cytoskeleton. The protein localises to the microtubule organizing center. The protein resides in the centrosome. It localises to the spindle pole. This Rattus norvegicus (Rat) protein is Centrosomal protein of 95 kDa (Cep95).